Reading from the N-terminus, the 493-residue chain is 6-aminohexanoate-cyclic-dimer hydrolase (493 aa).

Residues Lys-72 and Ser-150 each act as charge relay system in the active site. Residue Ser-174 is the Acyl-ester intermediate of the active site.

The protein belongs to the amidase family. Homodimer.

It carries out the reaction 1,8-diazacyclotetradecane-2,9-dione + H2O = N-(6-aminohexanoyl)-6-aminohexanoate. It functions in the pathway xenobiotic degradation; nylon-6 oligomer degradation. Its activity is regulated as follows. Strongly inhibited by 1 uM diisopropylphosphofluoridate and 10 uM p-chloromercuribenzoate but scarcely inhibited by 100 mM EDTA in vitro. In terms of biological role, specifically catalyzes the hydrolysis of 6-aminohexanoic acid cyclic dimer (1,8-diazacyclotetradecane-2,9-dione) to form the linear dimer 6-aminohexanoyl-6-aminohexanoic acid. Is inactive on 6-aminohexanoic acid oligomers (degree of polymerization 2 to 6), various other cyclic amides, cyclic diamides, linear amides, oligopeptides, and casein. Allows the bacterium to grow on a medium containing 6-aminohexanoic acid cyclic dimer as the sole carbon and nitrogen sources. The protein is 6-aminohexanoate-cyclic-dimer hydrolase (nylA) of Paenarthrobacter ureafaciens.